Here is a 269-residue protein sequence, read N- to C-terminus: 3-methyl-2-oxobutanoate hydroxymethyltransferase (269 aa).

Mg(2+)-binding residues include Asp-43 and Asp-82. 3-methyl-2-oxobutanoate-binding positions include 43 to 44 (DS), Asp-82, and Lys-110. Glu-112 contributes to the Mg(2+) binding site. The active-site Proton acceptor is the Glu-179.

This sequence belongs to the PanB family. In terms of assembly, homodecamer; pentamer of dimers. It depends on Mg(2+) as a cofactor.

It is found in the cytoplasm. The enzyme catalyses 3-methyl-2-oxobutanoate + (6R)-5,10-methylene-5,6,7,8-tetrahydrofolate + H2O = 2-dehydropantoate + (6S)-5,6,7,8-tetrahydrofolate. The protein operates within cofactor biosynthesis; (R)-pantothenate biosynthesis; (R)-pantoate from 3-methyl-2-oxobutanoate: step 1/2. Functionally, catalyzes the reversible reaction in which hydroxymethyl group from 5,10-methylenetetrahydrofolate is transferred onto alpha-ketoisovalerate to form ketopantoate. The sequence is that of 3-methyl-2-oxobutanoate hydroxymethyltransferase from Acinetobacter baumannii (strain AB307-0294).